Here is a 351-residue protein sequence, read N- to C-terminus: Phosphate acyltransferase (351 aa).

Belongs to the PlsX family. In terms of assembly, homodimer. Probably interacts with PlsY.

The protein localises to the cytoplasm. It carries out the reaction a fatty acyl-[ACP] + phosphate = an acyl phosphate + holo-[ACP]. It participates in lipid metabolism; phospholipid metabolism. In terms of biological role, catalyzes the reversible formation of acyl-phosphate (acyl-PO(4)) from acyl-[acyl-carrier-protein] (acyl-ACP). This enzyme utilizes acyl-ACP as fatty acyl donor, but not acyl-CoA. The polypeptide is Phosphate acyltransferase (Gloeothece citriformis (strain PCC 7424) (Cyanothece sp. (strain PCC 7424))).